The following is a 352-amino-acid chain: MSASFPLEALQAGHWFKLICGASYQHLPVIRNLALTYALAGADCVDVAAEPAVVRSALAGLAAYERLTGRDRPWLMVSLNDGEDLHFRRAWFDPDRCPTDCPRPCERVCPTDAITSTGVQRDRCYGCGRCLPICPLGLIEAQAWQVDAAALLPELLDLGINAIEIHTQVGHQKEFQQLWQQLQPWLPQLQAIAISCPAHPEAIAYLWDLQELVGNTVETVIWQTDGRPMSGDIGAGTTHAAVRFAQAMLTEGPPGHVQLAGGTNAHTVAKLQELKLLAPQVSRFVAGIACGGAARTPLAELLEPLAEQQRSLEAHPEVLQAAVTTAIALVGPLKQAVGGATRSIPAFLLRTP.

2 4Fe-4S ferredoxin-type domains span residues 88 to 119 and 121 to 144; these read RRAW…STGV and RDRC…AQAW. 8 residues coordinate [4Fe-4S] cluster: Cys97, Cys101, Cys105, Cys109, Cys124, Cys127, Cys130, and Cys134.

As to quaternary structure, interacts with KaiA, CikA and SasA; the complexes do not follow circadian rhythms. [4Fe-4S] cluster serves as cofactor.

Functions in an input pathway to the Kai circadian clock. Probably senses the metabolic state of the cell via plastoquinone levels and informs the clock to modulate the photoperiod length. Deletion decreases the ability of the bacteria to modulate the circadian period in response to altered light regimes. Mild overexpression increases the photoperiod. Rapidly degraded in the presence of the quinone analog DBMIB (2,5-dibromo-3-methyl-6-isopropyl-p-benzoquinone), an artifical electron acceptor for photosystem II that reduces the plastoquinone pool. Partially resonsible for sensitivity of CikA to DBMIB, influences the levels of KaiA. This chain is Light dependent period A, found in Synechococcus elongatus (strain ATCC 33912 / PCC 7942 / FACHB-805) (Anacystis nidulans R2).